The sequence spans 556 residues: Beta-caryophyllene synthase TPS9FN (556 aa).

(2E,6E)-farnesyl diphosphate-binding residues include Arg273, Asp310, Asp314, Arg451, and Asp454. The Mg(2+) site is built by Asp310 and Asp314. Positions 310–314 (DDIYD) match the DDXXD motif motif. Mg(2+) is bound by residues Asp454, Ser458, and Glu462.

This sequence belongs to the terpene synthase family. Tpsb subfamily. Mg(2+) serves as cofactor. The cofactor is Mn(2+). In terms of tissue distribution, expressed in glandular trichomes two to four weeks after flowering onset.

It carries out the reaction (2E,6E)-farnesyl diphosphate = (-)-(E)-beta-caryophyllene + diphosphate. The catalysed reaction is (2E,6E)-farnesyl diphosphate = alpha-humulene + diphosphate. The protein operates within secondary metabolite biosynthesis; terpenoid biosynthesis. Its function is as follows. Involved in sesquiterpene olefins biosynthesis, constituants of cannabinoids and terpenoids-rich resins. Catalyzes mainly the conversion of (2E)-farnesyl diphosphate to beta-caryophyllene and alpha-humulene. Can also use (2E)-geranyl diphosphate as substrate with low efficiency. The chain is Beta-caryophyllene synthase TPS9FN from Cannabis sativa (Hemp).